The chain runs to 627 residues: MAKVIQLSDELSNKIAAGEVVERPASVVKELVENAIDADSTVIEIDIEEAGLASIRVLDNGEGMENEDCKRAFRRHATSKIKDENDLFRVRTLGFRGEALPSIASVSHLEITTSTGEGAGTKLVLQGGNIISESRSSSRKGTEIVVSNLFFNTPARLKYMKTVHTELGNITDVVNRIALAHPEVSIRLRHHGKNLLQTNGNGDVRHVLAAIYGTAVAKKMLPLHVSSLDFEVKGYIALPEITRASRNYMSSVVNGRYIKNFPLVKAVHEGYHTLLPIGRHPITFIEITMDPILVDVNVHPSKLEVRLSKETELHDLIRDGIKDVFKQQQLIPSAQVPKKSAPAIKNEQQFITFDEKPPEKKVPEKSTAPSYSPMKLSSVVKEPVDAEEKLPPLQFDAPPIVDQEQTLEVSDVSAEQPETFEQECHEEQPQPASDRVPIMYPIGQMHGTYILAQNENGLYIIDQHAAQERIKYEYFREKVGEVEPEVQEMIVPLTFHYSTNEALIIEQHKQELESVGVFLESFGSNSYIVRCHPAWFPKGEEAELIEEIIQQVLDSKNIDIKKLREEAAIMMSCKGSIKANRHLRNDEIKALLDDLRSTSDPFTCPHGRPIIIHHSTYEMEKMFKRVM.

Residues 354–364 (DEKPPEKKVPE) show a composition bias toward basic and acidic residues. The segment at 354–374 (DEKPPEKKVPEKSTAPSYSPM) is disordered.

Belongs to the DNA mismatch repair MutL/HexB family.

Its function is as follows. This protein is involved in the repair of mismatches in DNA. It is required for dam-dependent methyl-directed DNA mismatch repair. May act as a 'molecular matchmaker', a protein that promotes the formation of a stable complex between two or more DNA-binding proteins in an ATP-dependent manner without itself being part of a final effector complex. Overexpression of mutSL partially suppresses the high spontaneous mutation frequency of a ytkD/mutM/mutY triple disruption which lacks the system required to prevent damage by oxidized guanine (8-oxo-dGTP). This suggests that MutSL also functions to repair mismatches due to oxidative stress in both growing and stationary phase cells. The protein is DNA mismatch repair protein MutL of Bacillus subtilis (strain 168).